A 379-amino-acid chain; its full sequence is Beta sliding clamp (379 aa).

This sequence belongs to the beta sliding clamp family. As to quaternary structure, forms a ring-shaped head-to-tail homodimer around DNA which binds and tethers DNA polymerases and other proteins to the DNA. The DNA replisome complex has a single clamp-loading complex (3 tau and 1 each of delta, delta', psi and chi subunits) which binds 3 Pol III cores (1 core on the leading strand and 2 on the lagging strand) each with a beta sliding clamp dimer. Additional proteins in the replisome are other copies of gamma, psi and chi, Ssb, DNA helicase and RNA primase.

Its subcellular location is the cytoplasm. In terms of biological role, confers DNA tethering and processivity to DNA polymerases and other proteins. Acts as a clamp, forming a ring around DNA (a reaction catalyzed by the clamp-loading complex) which diffuses in an ATP-independent manner freely and bidirectionally along dsDNA. Initially characterized for its ability to contact the catalytic subunit of DNA polymerase III (Pol III), a complex, multichain enzyme responsible for most of the replicative synthesis in bacteria; Pol III exhibits 3'-5' exonuclease proofreading activity. The beta chain is required for initiation of replication as well as for processivity of DNA replication. The polypeptide is Beta sliding clamp (dnaN) (Rickettsia bellii (strain RML369-C)).